The following is a 65-amino-acid chain: DQVRKCLSDTDCTNGEKCVQKNKICSTIVEIQRCEKEHFTIPCKSNNDCQVWAHEKICNKLPWGL.

It belongs to the protease inhibitor I44 family.

Its subcellular location is the secreted. In terms of biological role, inhibits carboxypeptidase A. This Ascaris suum (Pig roundworm) protein is Carboxypeptidase A inhibitor.